Here is a 1856-residue protein sequence, read N- to C-terminus: Golgi-specific brefeldin A-resistance guanine nucleotide exchange factor 1 (1856 aa).

Positions 1–211 are DCB (dimerization and cyclophiln-binding); DCB:DCB domain and DCB:HUS domain interaction; sequence MVDKNIYIIQ…EPKSYVGTNM (211 aa). Residues 1 to 378 form an interaction with RAB1B region; it reads MVDKNIYIIQ…SVHDMDYVNP (378 aa). 2 disordered regions span residues 215 to 256 and 291 to 370; these read KMRA…NGAT and DSGL…SASV. Positions 227-241 are enriched in basic residues; sequence WKKQKRSPRPPRHMT. A compositionally biased stretch (polar residues) spans 316-328; the sequence is RESTTTESGSNEI. Phosphoserine occurs at positions 349 and 352. At Thr-505 the chain carries Phosphothreonine. Residues 528 to 548 are HUS (homology upstream of Sec7); DCB:HUS domain interaction; sequence RIPSFVTELYINYDCDYYCAN. Positions 601–626 are disordered; that stretch reads QEKKETSRPSYEAVDSTQEANSTERA. Polar residues predominate over residues 615–625; it reads DSTQEANSTER. The SEC7 domain maps to 690-880; sequence ELIEIKNKKK…EDMYHAIKNE (191 aa). Residues 884 to 1370 are phosphatidylinositol-phosphate binding; required for translocation to the leading edge and for ARF1 activation upon GPCR signaling; it reads MPEEQTGLVR…LSRPSPSPLV (487 aa). A compositionally biased stretch (low complexity) spans 1284-1294; it reads TARADAPDAGA. Positions 1284–1333 are disordered; the sequence is TARADAPDAGAQSDSELPSYHQNDVSLDRGYTSDSEVYTDHGRPGKIHRS. The span at 1295–1308 shows a compositional bias: polar residues; that stretch reads QSDSELPSYHQNDV. Ser-1296 bears the Phosphoserine mark. At Tyr-1314 the chain carries Phosphotyrosine. Ser-1316, Ser-1318, and Ser-1333 each carry phosphoserine. Position 1335 is a phosphothreonine; by AMPK (Thr-1335). Disordered regions lie at residues 1430 to 1484, 1739 to 1806, and 1837 to 1856; these read CKSQ…EGVP, THLT…PPLI, and PVPL…SEVN. Residues 1432–1446 are compositionally biased toward basic and acidic residues; the sequence is SQDKRGKSHKYDSKG. Phosphoserine is present on residues Ser-1475 and Ser-1781. Residues 1775-1793 are compositionally biased toward low complexity; that stretch reads SSSSPGSPVASSPSRLSPS.

Can form homodimers and probably homotetramers. Interacts with COPG1; the interaction is independent on ARF1 activation. Interacts with ARF1, ARF3, ARF4 and ARF5. Interacts with RAB1B (GTP-bound form); required for GBF1 membrane association. Interacts with GGA1, GGA2 and GGA3. Interacts with USO1. Interacts (via SEC7 domain) with PNPLA2 (via C-terminus); the interaction is direct. Can form homodimers and probably homotetramers. Interacts with COPG1; the interaction is independent on ARF1 activation. Interacts with ARF1, ARF3, ARF4 and ARF5. Interacts with RAB1B (GTP-bound form); required for GBF1 membrane association. Interacts with GGA1, GGA2 and GGA3. Interacts with USO1. Interacts (via SEC7 domain) with PNPLA2 (via C-terminus); the interaction is direct. Interacts with ARMH3.

It is found in the golgi apparatus. The protein resides in the cis-Golgi network. It localises to the endoplasmic reticulum-Golgi intermediate compartment. Its subcellular location is the trans-Golgi network. The protein localises to the cytoplasm. It is found in the lipid droplet. The protein resides in the membrane. Its activity is regulated as follows. Inhibited by brefeldin A (BFA). Inhibited by golgicide A (GCA). Guanine-nucleotide exchange factor (GEF) for members of the Arf family of small GTPases involved in trafficking in the early secretory pathway; its GEF activity initiates the coating of nascent vesicles via the localized generation of activated ARFs through replacement of GDP with GTP. Recruitment to cis-Golgi membranes requires membrane association of Arf-GDP and can be regulated by ARF1, ARF3, ARF4 and ARF5. Involved in the recruitment of the COPI coat complex to cellular membranes such as the endoplasmic reticulum exit sites (ERES), and the endoplasmic reticulum-Golgi intermediate (ERGIC) and cis-Golgi compartments implicating ARF1 activation. Involved in COPI vesicle-dependent retrograde transport from the ERGIC and cis-Golgi compartments to the endoplasmic reticulum (ER). Involved in the trans-Golgi network recruitment of GGA1, GGA2, GGA3, BIG1, BIG2, and the AP-1 adaptor protein complex related to chlathrin-dependent transport; the function requires its GEF activity (probably at least in part on ARF4 and ARF5). Has GEF activity towards ARF1. Has in vitro GEF activity towards ARF5. Involved in the processing of PSAP. Required for the assembly of the Golgi apparatus. The AMPK-phosphorylated form is involved in Golgi disassembly during mitotis and under stress conditions. May be involved in the COPI vesicle-dependent recruitment of PNPLA2 to lipid droplets. In neutrophils, involved in G protein-coupled receptor (GPCR)-mediated chemotaxis und superoxide production. Proposed to be recruited by phosphatidylinositol-phosphates generated upon GPCR stimulation to the leading edge where it recruits and activates ARF1, and is involved in recruitment of GIT2 and the NADPH oxidase complex. Plays a role in maintaining mitochondrial morphology. The protein is Golgi-specific brefeldin A-resistance guanine nucleotide exchange factor 1 (GBF1) of Cricetulus griseus (Chinese hamster).